We begin with the raw amino-acid sequence, 317 residues long: Proline-rich protein 2 (317 aa).

The signal sequence occupies residues 1-16 (MLVVLFTVALLALSSA). Residues 15-317 (SAQGPREELQ…PPQGRPQGPQ (303 aa)) are disordered. Pro residues predominate over residues 32–44 (QRPPPSGSQPRPP). Asn-46 is a glycosylation site (N-linked (GlcNAc...) asparagine). Composition is skewed to pro residues over residues 51–183 (GPPP…PPAG) and 204–288 (QSPP…PTQG). Residues 289–305 (PHPTGGPQQTPPLAGNP) are compositionally biased toward low complexity. The segment covering 306 to 317 (QGPPQGRPQGPQ) has biased composition (pro residues).

Its subcellular location is the secreted. The polypeptide is Proline-rich protein 2 (Prp2) (Mus musculus (Mouse)).